Consider the following 318-residue polypeptide: NADH-ubiquinone oxidoreductase chain 1 (318 aa).

8 consecutive transmembrane segments (helical) span residues 2–22 (FMIN…FLTL), 69–89 (LLFT…WLPL), 100–120 (LGVL…LWSG), 146–166 (LAII…TNLI), 171–191 (HMWL…STLA), 231–251 (IMMM…TPLV), 253–273 (GIYT…FLWI), and 285–305 (LMHL…MWHV).

Belongs to the complex I subunit 1 family. In terms of assembly, core subunit of respiratory chain NADH dehydrogenase (Complex I) which is composed of 45 different subunits.

The protein localises to the mitochondrion inner membrane. It catalyses the reaction a ubiquinone + NADH + 5 H(+)(in) = a ubiquinol + NAD(+) + 4 H(+)(out). Functionally, core subunit of the mitochondrial membrane respiratory chain NADH dehydrogenase (Complex I) which catalyzes electron transfer from NADH through the respiratory chain, using ubiquinone as an electron acceptor. Essential for the catalytic activity and assembly of complex I. In Myrmecophaga tridactyla (Giant anteater), this protein is NADH-ubiquinone oxidoreductase chain 1 (MT-ND1).